A 159-amino-acid polypeptide reads, in one-letter code: Sperm acrosome-associated protein 5 (159 aa).

The signal sequence occupies residues methionine 1–alanine 21. Residues lysine 22–histidine 150 form the C-type lysozyme domain. 4 disulfide bridges follow: cysteine 27–cysteine 147, cysteine 51–cysteine 135, cysteine 85–cysteine 100, and cysteine 96–cysteine 114. Glutamate 56 is an active-site residue.

It belongs to the glycosyl hydrolase 22 family.

It is found in the secreted. It catalyses the reaction Hydrolysis of (1-&gt;4)-beta-linkages between N-acetylmuramic acid and N-acetyl-D-glucosamine residues in a peptidoglycan and between N-acetyl-D-glucosamine residues in chitodextrins.. The sequence is that of Sperm acrosome-associated protein 5 (SPACA5) from Homo sapiens (Human).